Reading from the N-terminus, the 237-residue chain is MNGVVAALEEMPPVTRFYTGACVLLTTAVHLEFVTPFHLYFNWELIIRKYQFWRLITSFCFFGSFGFSFLFNMIFTYRYCMMLEEGSFRGRRADFVYMFLFGAVLMILSGIFVQILFLGQAFTIMLVYIWSRRNPMIQMNFFGVLTFTAPYLPWVLLLFSLLLGNNAVVDFMGIACGHIYFFLEDVFPFQEHGKRFLKTPQWLVYLFDERRPEPLPEDERPGGFEWGDEQPEQEQHD.

Residues 1 to 20 are Cytoplasmic-facing; the sequence is MNGVVAALEEMPPVTRFYTG. Residues 21–41 form a helical membrane-spanning segment; sequence ACVLLTTAVHLEFVTPFHLYF. Residues 42–54 are Lumenal-facing; that stretch reads NWELIIRKYQFWR. The chain crosses the membrane as a helical span at residues 55-75; that stretch reads LITSFCFFGSFGFSFLFNMIF. Residues 76–97 lie on the Cytoplasmic side of the membrane; the sequence is TYRYCMMLEEGSFRGRRADFVY. The chain crosses the membrane as a helical span at residues 98-118; that stretch reads MFLFGAVLMILSGIFVQILFL. Residues 119-166 lie on the Lumenal side of the membrane; the sequence is GQAFTIMLVYIWSRRNPMIQMNFFGVLTFTAPYLPWVLLLFSLLLGNN. The chain crosses the membrane as a helical span at residues 167–187; the sequence is AVVDFMGIACGHIYFFLEDVF. Topologically, residues 188 to 237 are cytoplasmic; sequence PFQEHGKRFLKTPQWLVYLFDERRPEPLPEDERPGGFEWGDEQPEQEQHD. A compositionally biased stretch (basic and acidic residues) spans 212–222; that stretch reads PEPLPEDERPG. Positions 212-237 are disordered; it reads PEPLPEDERPGGFEWGDEQPEQEQHD. Acidic residues predominate over residues 226–237; the sequence is WGDEQPEQEQHD.

Belongs to the derlin family.

It is found in the endoplasmic reticulum membrane. Functionally, may be required for the degradation process of some specific misfolded endoplasmic reticulum (ER) luminal proteins. Participates in the transfer of misfolded proteins from the ER to the cytosol, where they are destroyed by the proteasome in a ubiquitin-dependent manner. Its precise function remains unclear, but its ability to complement der1 mutations in C.cerevisiae, suggests a similar function in the degradation of ER misfolded proteins. This is Derlin-2 from Caenorhabditis elegans.